The following is a 53-amino-acid chain: Toxin CjTL7 (53 aa).

An N-terminal signal peptide occupies residues 1-22 (MMIKVLLLLSSALVLFTPEAEG). Tryptophan 51 is modified (tryptophan amide).

Post-translationally, contains 4 disulfide bonds.

The protein localises to the secreted. The protein resides in the nematocyst. Its function is as follows. In vivo, only causes a weak change in behavior in shrimps (C.multidentata) (slight twitching of the walking legs), but no lethal effect is observed. No activity is observed when injected into fly larvae (M.domestica). This chain is Toxin CjTL7, found in Epiactis japonica (Sea anemone).